A 129-amino-acid polypeptide reads, in one-letter code: Glycine cleavage system H protein 2 (129 aa).

Residues 24–105 (SVTVGISDHA…PYVSWFFKLK (82 aa)) enclose the Lipoyl-binding domain. Residue lysine 65 is modified to N6-lipoyllysine.

Belongs to the GcvH family. As to quaternary structure, the glycine cleavage system is composed of four proteins: P, T, L and H. Requires (R)-lipoate as cofactor.

Its function is as follows. The glycine cleavage system catalyzes the degradation of glycine. The H protein shuttles the methylamine group of glycine from the P protein to the T protein. This chain is Glycine cleavage system H protein 2, found in Pseudomonas aeruginosa (strain ATCC 15692 / DSM 22644 / CIP 104116 / JCM 14847 / LMG 12228 / 1C / PRS 101 / PAO1).